The following is a 223-amino-acid chain: Endonuclease V (223 aa).

Mg(2+) is bound by residues aspartate 44 and aspartate 109.

This sequence belongs to the endonuclease V family. Mg(2+) is required as a cofactor.

It localises to the cytoplasm. It carries out the reaction Endonucleolytic cleavage at apurinic or apyrimidinic sites to products with a 5'-phosphate.. Its function is as follows. DNA repair enzyme involved in the repair of deaminated bases. Selectively cleaves double-stranded DNA at the second phosphodiester bond 3' to a deoxyinosine leaving behind the intact lesion on the nicked DNA. This chain is Endonuclease V, found in Methanothrix thermoacetophila (strain DSM 6194 / JCM 14653 / NBRC 101360 / PT) (Methanosaeta thermophila).